Reading from the N-terminus, the 459-residue chain is MSCPRLVIAGTSSGAGKTSLTLGLTAALRRRGLKVQTFKVGPDFLDPTWLSLASERPCINLDGWMCGERYVRDRFATATADADIAIVEGVMGLFDGADPAAAAGSTAEIARWLDAPVLLVVNAHGMARSLAALVKGYAEFDPDLHLAGVIANRCGSTRHGDWLSEALCAAGMPPLTGTVIRDSLPPLPSRHLGLVTADRQHLTSEALNTLADAVERQLDMPRILDLAEKVPATPGVAATASSTEGRPVRIGMAFDEAFHFYYPDNLQALEDAGATLVRFSPMHDDTLPADLDALLLGGGYPEEYADTLETNQTMRQAVADFAAADRPIYAECGGLMYLSEGIELRDGSRHAMTGALPFATRMLATRKRLGYAEVRHLAHGPFGPAGTCLRGHEFHYSEAIAEPAAPGWQSAWQVSYRRSNKPVAEGYQRGRLFASYVHTHFASRPGAARAFVDFCRGES.

The 198-residue stretch at 249–446 folds into the GATase cobBQ-type domain; that stretch reads RIGMAFDEAF…VHTHFASRPG (198 aa). Residue Cys-332 is the Nucleophile of the active site.

Belongs to the CobB/CbiA family. Requires Mg(2+) as cofactor.

The catalysed reaction is cob(II)yrinate + 2 L-glutamine + 2 ATP + 2 H2O = cob(II)yrinate a,c diamide + 2 L-glutamate + 2 ADP + 2 phosphate + 2 H(+). It participates in cofactor biosynthesis; adenosylcobalamin biosynthesis; cob(II)yrinate a,c-diamide from sirohydrochlorin (anaerobic route): step 10/10. Catalyzes the ATP-dependent amidation of the two carboxylate groups at positions a and c of cobyrinate, using either L-glutamine or ammonia as the nitrogen source. This is Cobyrinate a,c-diamide synthase from Syntrophotalea carbinolica (strain DSM 2380 / NBRC 103641 / GraBd1) (Pelobacter carbinolicus).